Reading from the N-terminus, the 663-residue chain is Chaperone protein HtpG (663 aa).

An a; substrate-binding region spans residues 1-352 (MTKQTLSFQA…SADLPLNVSR (352 aa)). The span at 218–228 (ELINPSDEKGG) shows a compositional bias: basic and acidic residues. Positions 218–237 (ELINPSDEKGGRQPGGMVKT) are disordered. The segment at 353–595 (ELLQESRDVK…DHGMSTQLAR (243 aa)) is b. A c region spans residues 596-663 (MLKQAGQAAP…YVKRVNALLV (68 aa)).

It belongs to the heat shock protein 90 family. Homodimer.

The protein resides in the cytoplasm. Its function is as follows. Molecular chaperone. Has ATPase activity. The sequence is that of Chaperone protein HtpG from Albidiferax ferrireducens (strain ATCC BAA-621 / DSM 15236 / T118) (Rhodoferax ferrireducens).